We begin with the raw amino-acid sequence, 640 residues long: Acid beta-fructofuranosidase 2, vacuolar (640 aa).

Residues 1–22 form a disordered region; sequence MDTNTTSYTPLPGDPFLSGPPE. Over 1–29 the chain is Cytoplasmic; the sequence is MDTNTTSYTPLPGDPFLSGPPETPRRPLK. A propeptide spans 1–78 (removed in mature form); it reads MDTNTTSYTP…HPQSTTNTML (78 aa). The helical transmembrane segment at 30 to 49 threads the bilayer; that stretch reads GFAVIFASVIFLMSLVALII. Residues 50–616 are Lumenal-facing; sequence HQGPQQPPDV…FSPDAASHSS (567 aa). Substrate contacts are provided by residues 93-96, Gln112, Trp120, 155-156, 219-220, Glu274, and Asp307; these read WMND, WT, and RD. Asp96 is a catalytic residue. A disulfide bond links Cys464 and Cys512. The helical transmembrane segment at 617–639 threads the bilayer; it reads FTPVTVFIKFIVPFGIFLTLYFV. Arg640 is a topological domain (cytoplasmic).

It belongs to the glycosyl hydrolase 32 family. In terms of tissue distribution, expressed in buds, stems, roots and leaves.

Its subcellular location is the membrane. The protein resides in the vacuole membrane. It catalyses the reaction Hydrolysis of terminal non-reducing beta-D-fructofuranoside residues in beta-D-fructofuranosides.. Vacuolar invertase. The sequence is that of Acid beta-fructofuranosidase 2, vacuolar from Rosa hybrid cultivar.